A 321-amino-acid polypeptide reads, in one-letter code: MNRPERLQPGVKLRDADKVSRIPVKVVPSERDTMLRKPDWLRVKLPASNQRITDIKQALRKNGLHSVCEEASCPNLSECFNHGTATFMILGAICTRRCPFCDVAHGRPLKPDAEEPKKLAQTIKDMKLKYVVITSVDRDDLRDGGAQHFADCIREIRLLNPEIKIETLVPDFRGRIDAALEILATEPPDVFNHNLETAPMHYRKARPGANYQWSLDLLKKFKERHPNIPTKSGLMMGLGETNEEIAQVLHDLRAHNVEMLTLGQYLQPSKFHLPVERYVSPAEFDELKELAESIGFTHAACGPLVRSSYHADLQAQGKEVK.

7 residues coordinate [4Fe-4S] cluster: C68, C73, C79, C94, C98, C101, and S308. In terms of domain architecture, Radical SAM core spans 80-297 (FNHGTATFMI…KELAESIGFT (218 aa)).

Belongs to the radical SAM superfamily. Lipoyl synthase family. Requires [4Fe-4S] cluster as cofactor.

Its subcellular location is the cytoplasm. The catalysed reaction is [[Fe-S] cluster scaffold protein carrying a second [4Fe-4S](2+) cluster] + N(6)-octanoyl-L-lysyl-[protein] + 2 oxidized [2Fe-2S]-[ferredoxin] + 2 S-adenosyl-L-methionine + 4 H(+) = [[Fe-S] cluster scaffold protein] + N(6)-[(R)-dihydrolipoyl]-L-lysyl-[protein] + 4 Fe(3+) + 2 hydrogen sulfide + 2 5'-deoxyadenosine + 2 L-methionine + 2 reduced [2Fe-2S]-[ferredoxin]. Its pathway is protein modification; protein lipoylation via endogenous pathway; protein N(6)-(lipoyl)lysine from octanoyl-[acyl-carrier-protein]: step 2/2. Catalyzes the radical-mediated insertion of two sulfur atoms into the C-6 and C-8 positions of the octanoyl moiety bound to the lipoyl domains of lipoate-dependent enzymes, thereby converting the octanoylated domains into lipoylated derivatives. In Shewanella pealeana (strain ATCC 700345 / ANG-SQ1), this protein is Lipoyl synthase.